A 209-amino-acid chain; its full sequence is Large ribosomal subunit protein uL3 (209 aa).

The tract at residues 117 to 142 (FQGPIKRHGQSRGPETHGSRYHRRPG) is disordered.

The protein belongs to the universal ribosomal protein uL3 family. In terms of assembly, part of the 50S ribosomal subunit. Forms a cluster with proteins L14 and L19.

Its function is as follows. One of the primary rRNA binding proteins, it binds directly near the 3'-end of the 23S rRNA, where it nucleates assembly of the 50S subunit. The sequence is that of Large ribosomal subunit protein uL3 from Clostridioides difficile (strain 630) (Peptoclostridium difficile).